The sequence spans 235 residues: NAD(P)H-hydrate epimerase (235 aa).

The YjeF N-terminal domain maps to 18–221 (AAKIDEQLFS…GLVEEHGLQM (204 aa)). A (6S)-NADPHX-binding site is contributed by 65–69 (NNGGD). Asn-66 and Asp-127 together coordinate K(+). (6S)-NADPHX contacts are provided by residues 131–137 (GFSFKPP) and Asp-160. Ser-163 is a binding site for K(+).

Belongs to the NnrE/AIBP family. The cofactor is K(+).

The catalysed reaction is (6R)-NADHX = (6S)-NADHX. It catalyses the reaction (6R)-NADPHX = (6S)-NADPHX. Functionally, catalyzes the epimerization of the S- and R-forms of NAD(P)HX, a damaged form of NAD(P)H that is a result of enzymatic or heat-dependent hydration. This is a prerequisite for the S-specific NAD(P)H-hydrate dehydratase to allow the repair of both epimers of NAD(P)HX. The chain is NAD(P)H-hydrate epimerase from Caenorhabditis briggsae.